The primary structure comprises 213 residues: Small ribosomal subunit protein uS7 (213 aa).

Belongs to the universal ribosomal protein uS7 family. Component of the small ribosomal subunit (SSU). Mature N.crassa ribosomes consist of a small (40S) and a large (60S) subunit. The 40S small subunit contains 1 molecule of ribosomal RNA (18S rRNA) and at least 32 different proteins. The large 60S subunit contains 3 rRNA molecules (26S, 5.8S and 5S rRNA) and at least 42 different proteins.

Its subcellular location is the cytoplasm. In terms of biological role, component of the ribosome, a large ribonucleoprotein complex responsible for the synthesis of proteins in the cell. The small ribosomal subunit (SSU) binds messenger RNAs (mRNAs) and translates the encoded message by selecting cognate aminoacyl-transfer RNA (tRNA) molecules. The large subunit (LSU) contains the ribosomal catalytic site termed the peptidyl transferase center (PTC), which catalyzes the formation of peptide bonds, thereby polymerizing the amino acids delivered by tRNAs into a polypeptide chain. The nascent polypeptides leave the ribosome through a tunnel in the LSU and interact with protein factors that function in enzymatic processing, targeting, and the membrane insertion of nascent chains at the exit of the ribosomal tunnel. The sequence is that of Small ribosomal subunit protein uS7 (rps-5) from Neurospora crassa (strain ATCC 24698 / 74-OR23-1A / CBS 708.71 / DSM 1257 / FGSC 987).